Reading from the N-terminus, the 556-residue chain is Arginine--tRNA ligase (556 aa).

Residues 132-142 (ANPTGSLHLGH) carry the 'HIGH' region motif.

The protein belongs to the class-I aminoacyl-tRNA synthetase family. Monomer.

The protein resides in the cytoplasm. The catalysed reaction is tRNA(Arg) + L-arginine + ATP = L-arginyl-tRNA(Arg) + AMP + diphosphate. The chain is Arginine--tRNA ligase from Anoxybacillus flavithermus (strain DSM 21510 / WK1).